The chain runs to 1399 residues: Alpha-glucan water dikinase 1, chloroplastic (1399 aa).

Residues 1–75 (MSNSVVHNLL…GRPLSFVPRA (75 aa)) constitute a chloroplast transit peptide. Val76 is modified (N-acetylvaline). The segment at 265-306 (LLKKDNSNESPKSNGTSSSGREEKKKVSKQPERKKNYNTDKI) is disordered. Over residues 272–283 (NESPKSNGTSSS) the composition is skewed to polar residues. Over residues 284-306 (GREEKKKVSKQPERKKNYNTDKI) the composition is skewed to basic and acidic residues. The Tele-phosphohistidine intermediate role is filled by His1004.

The protein belongs to the PEP-utilizing enzyme family. In terms of assembly, homodimer. Mg(2+) serves as cofactor.

It localises to the plastid. The protein localises to the chloroplast. It catalyses the reaction [(1-&gt;4)-alpha-D-glucosyl](n) + n ATP + n H2O = [(1-&gt;4)-6-phospho-alpha-D-glucosyl](n) + n AMP + n phosphate + 2n H(+). Mediates the incorporation of phosphate into starch-like alpha-glucan, mostly at the C-6 position of glucose units. Acts as an overall regulator of starch mobilization. Required for starch degradation, suggesting that the phosphate content of starch regulates its degradability. The chain is Alpha-glucan water dikinase 1, chloroplastic from Arabidopsis thaliana (Mouse-ear cress).